The following is a 153-amino-acid chain: 6,7-dimethyl-8-ribityllumazine synthase (153 aa).

5-amino-6-(D-ribitylamino)uracil-binding positions include Phe22, 56-58, and 80-82; these read AFE and TVI. 85 to 86 is a binding site for (2S)-2-hydroxy-3-oxobutyl phosphate; that stretch reads ST. Catalysis depends on His88, which acts as the Proton donor. Phe113 provides a ligand contact to 5-amino-6-(D-ribitylamino)uracil. Arg127 is a (2S)-2-hydroxy-3-oxobutyl phosphate binding site.

It belongs to the DMRL synthase family. In terms of assembly, forms an icosahedral capsid composed of 60 subunits, arranged as a dodecamer of pentamers.

The catalysed reaction is (2S)-2-hydroxy-3-oxobutyl phosphate + 5-amino-6-(D-ribitylamino)uracil = 6,7-dimethyl-8-(1-D-ribityl)lumazine + phosphate + 2 H2O + H(+). It functions in the pathway cofactor biosynthesis; riboflavin biosynthesis; riboflavin from 2-hydroxy-3-oxobutyl phosphate and 5-amino-6-(D-ribitylamino)uracil: step 1/2. Functionally, catalyzes the formation of 6,7-dimethyl-8-ribityllumazine by condensation of 5-amino-6-(D-ribitylamino)uracil with 3,4-dihydroxy-2-butanone 4-phosphate. This is the penultimate step in the biosynthesis of riboflavin. The chain is 6,7-dimethyl-8-ribityllumazine synthase from Actinobacillus pleuropneumoniae serotype 3 (strain JL03).